A 214-amino-acid polypeptide reads, in one-letter code: Phosphatidylserine decarboxylase proenzyme (214 aa).

S182 (schiff-base intermediate with substrate; via pyruvic acid) is an active-site residue. S182 is modified (pyruvic acid (Ser); by autocatalysis).

Belongs to the phosphatidylserine decarboxylase family. PSD-A subfamily. Heterodimer of a large membrane-associated beta subunit and a small pyruvoyl-containing alpha subunit. Pyruvate serves as cofactor. In terms of processing, is synthesized initially as an inactive proenzyme. Formation of the active enzyme involves a self-maturation process in which the active site pyruvoyl group is generated from an internal serine residue via an autocatalytic post-translational modification. Two non-identical subunits are generated from the proenzyme in this reaction, and the pyruvate is formed at the N-terminus of the alpha chain, which is derived from the carboxyl end of the proenzyme. The post-translation cleavage follows an unusual pathway, termed non-hydrolytic serinolysis, in which the side chain hydroxyl group of the serine supplies its oxygen atom to form the C-terminus of the beta chain, while the remainder of the serine residue undergoes an oxidative deamination to produce ammonia and the pyruvoyl prosthetic group on the alpha chain.

It localises to the cell membrane. The catalysed reaction is a 1,2-diacyl-sn-glycero-3-phospho-L-serine + H(+) = a 1,2-diacyl-sn-glycero-3-phosphoethanolamine + CO2. It functions in the pathway phospholipid metabolism; phosphatidylethanolamine biosynthesis; phosphatidylethanolamine from CDP-diacylglycerol: step 2/2. Functionally, catalyzes the formation of phosphatidylethanolamine (PtdEtn) from phosphatidylserine (PtdSer). The chain is Phosphatidylserine decarboxylase proenzyme from Burkholderia ambifaria (strain MC40-6).